Reading from the N-terminus, the 306-residue chain is Ornithine carbamoyltransferase (306 aa).

Residues 54-57, Q81, R105, and 132-135 each bind carbamoyl phosphate; these read STRT and HPLQ. Residues N162, D226, and 230–231 each bind L-ornithine; that span reads SM. Residues 266 to 267 and R294 each bind carbamoyl phosphate; that span reads CL.

Belongs to the aspartate/ornithine carbamoyltransferase superfamily. OTCase family.

The protein localises to the cytoplasm. The catalysed reaction is carbamoyl phosphate + L-ornithine = L-citrulline + phosphate + H(+). The protein operates within amino-acid biosynthesis; L-arginine biosynthesis; L-arginine from L-ornithine and carbamoyl phosphate: step 1/3. Functionally, reversibly catalyzes the transfer of the carbamoyl group from carbamoyl phosphate (CP) to the N(epsilon) atom of ornithine (ORN) to produce L-citrulline. This Sulfolobus acidocaldarius (strain ATCC 33909 / DSM 639 / JCM 8929 / NBRC 15157 / NCIMB 11770) protein is Ornithine carbamoyltransferase.